The chain runs to 353 residues: NADH-quinone oxidoreductase subunit H (353 aa).

9 helical membrane passes run 8-28 (LLVY…IFIW), 75-95 (GVFW…FAAI), 108-128 (IGIL…FMAG), 148-168 (VSYE…TGSL), 179-199 (VPFI…AMAE), 229-249 (LFYL…TTLF), 258-278 (LHPV…IIWV), 297-317 (FLLP…LIAP), and 319-339 (INTA…VLLF).

The protein belongs to the complex I subunit 1 family. NDH-1 is composed of 14 different subunits. Subunits NuoA, H, J, K, L, M, N constitute the membrane sector of the complex.

It is found in the cell membrane. It catalyses the reaction a quinone + NADH + 5 H(+)(in) = a quinol + NAD(+) + 4 H(+)(out). NDH-1 shuttles electrons from NADH, via FMN and iron-sulfur (Fe-S) centers, to quinones in the respiratory chain. The immediate electron acceptor for the enzyme in this species is believed to be ubiquinone. Couples the redox reaction to proton translocation (for every two electrons transferred, four hydrogen ions are translocated across the cytoplasmic membrane), and thus conserves the redox energy in a proton gradient. This subunit may bind ubiquinone. The polypeptide is NADH-quinone oxidoreductase subunit H (Dehalococcoides mccartyi (strain CBDB1)).